The following is a 102-amino-acid chain: Putative pterin-4-alpha-carbinolamine dehydratase (102 aa).

The protein belongs to the pterin-4-alpha-carbinolamine dehydratase family.

It catalyses the reaction (4aS,6R)-4a-hydroxy-L-erythro-5,6,7,8-tetrahydrobiopterin = (6R)-L-erythro-6,7-dihydrobiopterin + H2O. The sequence is that of Putative pterin-4-alpha-carbinolamine dehydratase from Burkholderia cenocepacia (strain ATCC BAA-245 / DSM 16553 / LMG 16656 / NCTC 13227 / J2315 / CF5610) (Burkholderia cepacia (strain J2315)).